The primary structure comprises 406 residues: Tryptophan synthase beta chain (406 aa).

Position 99 is an N6-(pyridoxal phosphate)lysine (lysine 99).

Belongs to the TrpB family. As to quaternary structure, tetramer of two alpha and two beta chains. Pyridoxal 5'-phosphate is required as a cofactor.

It carries out the reaction (1S,2R)-1-C-(indol-3-yl)glycerol 3-phosphate + L-serine = D-glyceraldehyde 3-phosphate + L-tryptophan + H2O. Its pathway is amino-acid biosynthesis; L-tryptophan biosynthesis; L-tryptophan from chorismate: step 5/5. In terms of biological role, the beta subunit is responsible for the synthesis of L-tryptophan from indole and L-serine. This is Tryptophan synthase beta chain (trpB) from Caulobacter vibrioides (strain ATCC 19089 / CIP 103742 / CB 15) (Caulobacter crescentus).